We begin with the raw amino-acid sequence, 227 residues long: Cytochrome c oxidase subunit 2 (227 aa).

The Mitochondrial intermembrane portion of the chain corresponds to methionine 1–serine 14. A helical membrane pass occupies residues proline 15 to threonine 45. Topologically, residues leucine 46–glutamine 59 are mitochondrial matrix. A helical transmembrane segment spans residues glutamate 60–threonine 87. At aspartate 88–leucine 227 the chain is on the mitochondrial intermembrane side. Histidine 161, cysteine 196, glutamate 198, cysteine 200, histidine 204, and methionine 207 together coordinate Cu cation. Glutamate 198 contacts Mg(2+).

This sequence belongs to the cytochrome c oxidase subunit 2 family. In terms of assembly, component of the cytochrome c oxidase (complex IV, CIV), a multisubunit enzyme composed of 14 subunits. The complex is composed of a catalytic core of 3 subunits MT-CO1, MT-CO2 and MT-CO3, encoded in the mitochondrial DNA, and 11 supernumerary subunits COX4I, COX5A, COX5B, COX6A, COX6B, COX6C, COX7A, COX7B, COX7C, COX8 and NDUFA4, which are encoded in the nuclear genome. The complex exists as a monomer or a dimer and forms supercomplexes (SCs) in the inner mitochondrial membrane with NADH-ubiquinone oxidoreductase (complex I, CI) and ubiquinol-cytochrome c oxidoreductase (cytochrome b-c1 complex, complex III, CIII), resulting in different assemblies (supercomplex SCI(1)III(2)IV(1) and megacomplex MCI(2)III(2)IV(2)). Found in a complex with TMEM177, COA6, COX18, COX20, SCO1 and SCO2. Interacts with TMEM177 in a COX20-dependent manner. Interacts with COX20. Interacts with COX16. Cu cation is required as a cofactor.

The protein resides in the mitochondrion inner membrane. The enzyme catalyses 4 Fe(II)-[cytochrome c] + O2 + 8 H(+)(in) = 4 Fe(III)-[cytochrome c] + 2 H2O + 4 H(+)(out). In terms of biological role, component of the cytochrome c oxidase, the last enzyme in the mitochondrial electron transport chain which drives oxidative phosphorylation. The respiratory chain contains 3 multisubunit complexes succinate dehydrogenase (complex II, CII), ubiquinol-cytochrome c oxidoreductase (cytochrome b-c1 complex, complex III, CIII) and cytochrome c oxidase (complex IV, CIV), that cooperate to transfer electrons derived from NADH and succinate to molecular oxygen, creating an electrochemical gradient over the inner membrane that drives transmembrane transport and the ATP synthase. Cytochrome c oxidase is the component of the respiratory chain that catalyzes the reduction of oxygen to water. Electrons originating from reduced cytochrome c in the intermembrane space (IMS) are transferred via the dinuclear copper A center (CU(A)) of subunit 2 and heme A of subunit 1 to the active site in subunit 1, a binuclear center (BNC) formed by heme A3 and copper B (CU(B)). The BNC reduces molecular oxygen to 2 water molecules using 4 electrons from cytochrome c in the IMS and 4 protons from the mitochondrial matrix. The polypeptide is Cytochrome c oxidase subunit 2 (MT-CO2) (Gorilla gorilla gorilla (Western lowland gorilla)).